A 385-amino-acid polypeptide reads, in one-letter code: Protein pelota homolog (385 aa).

Lys-162 participates in a covalent cross-link: Glycyl lysine isopeptide (Lys-Gly) (interchain with G-Cter in SUMO2). Phosphoserine is present on residues Ser-374, Ser-380, Ser-381, and Ser-382.

It belongs to the eukaryotic release factor 1 family. Pelota subfamily. Component of the Pelota-HBS1L complex, also named Dom34-Hbs1 complex, composed of PELO and HBS1L. Interacts with PINK1. Interacts with ABCE1. Interacts with CNOT4. A divalent metal cation serves as cofactor.

It localises to the cytoplasm. In terms of biological role, component of the Pelota-HBS1L complex, a complex that recognizes stalled ribosomes and triggers the No-Go Decay (NGD) pathway. In the Pelota-HBS1L complex, PELO recognizes ribosomes stalled at the 3' end of an mRNA and engages stalled ribosomes by destabilizing mRNA in the mRNA channel. Following mRNA extraction from stalled ribosomes by the SKI complex, the Pelota-HBS1L complex promotes recruitment of ABCE1, which drives the disassembly of stalled ribosomes, followed by degradation of damaged mRNAs as part of the NGD pathway. As part of the PINK1-regulated signaling, upon mitochondrial damage is recruited to the ribosome/mRNA-ribonucleoprotein complex associated to mitochondrial outer membrane thereby enabling the recruitment of autophagy receptors and induction of mitophagy. The protein is Protein pelota homolog (PELO) of Bos taurus (Bovine).